The sequence spans 639 residues: Chaperone protein DnaK (639 aa).

At Thr197 the chain carries Phosphothreonine; by autocatalysis. Basic and acidic residues-rich tracts occupy residues Ala514 to Glu529 and Gly540 to Asp553. 2 disordered regions span residues Ala514 to Pro554 and Asp603 to Gly639. The span at Ala612–Asp633 shows a compositional bias: acidic residues.

It belongs to the heat shock protein 70 family.

Its function is as follows. Acts as a chaperone. This chain is Chaperone protein DnaK, found in Jannaschia sp. (strain CCS1).